The sequence spans 586 residues: Glutamate--tRNA ligase (586 aa).

The short motif at 114–124 (PNPNGPWHVGH) is the 'HIGH' region element. 2 stretches are compositionally biased toward basic and acidic residues: residues 431-443 (ARGE…HEAV) and 459-468 (HPEHPDRGDR). The interval 431-468 (ARGEGPEESHEAVEVPVDDGPDEATPQVHPEHPDRGDR) is disordered.

This sequence belongs to the class-I aminoacyl-tRNA synthetase family. Glutamate--tRNA ligase type 2 subfamily.

It is found in the cytoplasm. The catalysed reaction is tRNA(Glu) + L-glutamate + ATP = L-glutamyl-tRNA(Glu) + AMP + diphosphate. Functionally, catalyzes the attachment of glutamate to tRNA(Glu) in a two-step reaction: glutamate is first activated by ATP to form Glu-AMP and then transferred to the acceptor end of tRNA(Glu). This chain is Glutamate--tRNA ligase, found in Halobacterium salinarum (strain ATCC 29341 / DSM 671 / R1).